Consider the following 379-residue polypeptide: Cytochrome b (379 aa).

4 consecutive transmembrane segments (helical) span residues 33–53 (FGSL…FLAM), 77–98 (WLIR…FIHV), 113–133 (WNIG…GYVL), and 178–198 (FFAF…VHLL). Heme b is bound by residues H83 and H97. The heme b site is built by H182 and H196. H201 lines the a ubiquinone pocket. 4 consecutive transmembrane segments (helical) span residues 226 to 246 (IKDL…ALFF), 288 to 308 (LGGV…PLLN), 320 to 340 (ITQT…WIGG), and 347 to 367 (FTMI…ILXP).

Belongs to the cytochrome b family. As to quaternary structure, the cytochrome bc1 complex contains 11 subunits: 3 respiratory subunits (MT-CYB, CYC1 and UQCRFS1), 2 core proteins (UQCRC1 and UQCRC2) and 6 low-molecular weight proteins (UQCRH/QCR6, UQCRB/QCR7, UQCRQ/QCR8, UQCR10/QCR9, UQCR11/QCR10 and a cleavage product of UQCRFS1). This cytochrome bc1 complex then forms a dimer. Heme b serves as cofactor.

It is found in the mitochondrion inner membrane. In terms of biological role, component of the ubiquinol-cytochrome c reductase complex (complex III or cytochrome b-c1 complex) that is part of the mitochondrial respiratory chain. The b-c1 complex mediates electron transfer from ubiquinol to cytochrome c. Contributes to the generation of a proton gradient across the mitochondrial membrane that is then used for ATP synthesis. This is Cytochrome b (MT-CYB) from Akodon toba (Chaco grass mouse).